Consider the following 571-residue polypeptide: Proline--tRNA ligase (571 aa).

Belongs to the class-II aminoacyl-tRNA synthetase family. ProS type 1 subfamily. As to quaternary structure, homodimer.

Its subcellular location is the cytoplasm. The catalysed reaction is tRNA(Pro) + L-proline + ATP = L-prolyl-tRNA(Pro) + AMP + diphosphate. Catalyzes the attachment of proline to tRNA(Pro) in a two-step reaction: proline is first activated by ATP to form Pro-AMP and then transferred to the acceptor end of tRNA(Pro). As ProRS can inadvertently accommodate and process non-cognate amino acids such as alanine and cysteine, to avoid such errors it has two additional distinct editing activities against alanine. One activity is designated as 'pretransfer' editing and involves the tRNA(Pro)-independent hydrolysis of activated Ala-AMP. The other activity is designated 'posttransfer' editing and involves deacylation of mischarged Ala-tRNA(Pro). The misacylated Cys-tRNA(Pro) is not edited by ProRS. The polypeptide is Proline--tRNA ligase (Vibrio parahaemolyticus serotype O3:K6 (strain RIMD 2210633)).